The chain runs to 216 residues: ATP synthase subunit C lysine N-methyltransferase (216 aa).

The residue at position 1 (methionine 1) is an N-acetylmethionine. Basic and acidic residues predominate over residues 1–12 (MERGETPEEERQ). Positions 1–25 (MERGETPEEERQSGCVLPTSPESDS) are disordered. A helical transmembrane segment spans residues 31–50 (WGFLITGVIGGALVTVYAVT). The required for mitochondrial location stretch occupies residues 51-85 (TPFIAPALRKVCLPFVPATSRQVENVVKMLQHRRG).

It belongs to the ANT/ATPSC lysine N-methyltransferase family.

The protein resides in the mitochondrion membrane. The enzyme catalyses L-lysyl-[protein] + 3 S-adenosyl-L-methionine = N(6),N(6),N(6)-trimethyl-L-lysyl-[protein] + 3 S-adenosyl-L-homocysteine + 3 H(+). Functionally, mitochondrial protein-lysine N-methyltransferase that trimethylates ATP synthase subunit C, ATP5MC1 and ATP5MC2. Trimethylation is required for proper incorporation of the C subunit into the ATP synthase complex and mitochondrial respiration. Promotes chronic pain. Involved in persistent inflammatory and neuropathic pain: methyltransferase activity in the mitochondria of sensory neurons promotes chronic pain via a pathway that depends on the production of reactive oxygen species (ROS) and on the engagement of spinal cord microglia. This is ATP synthase subunit C lysine N-methyltransferase (Atpsckmt) from Rattus norvegicus (Rat).